A 954-amino-acid chain; its full sequence is Regulatory protein FlaEY (954 aa).

Its function is as follows. Functions in trans to modulate the level of transcription of the flagellin genes and several genes encoding chemotaxis functions. It is itself temporally controlled. The protein is Regulatory protein FlaEY (flaEY) of Caulobacter vibrioides (strain ATCC 19089 / CIP 103742 / CB 15) (Caulobacter crescentus).